Reading from the N-terminus, the 232-residue chain is Oxidoreductase 1 (232 aa).

Belongs to the MQO family. The cofactor is FAD.

In terms of biological role, oxidoreductase; part of the gene cluster that mediates the biosynthesis of elsinochromes, pigments consisting of at least four interconvertible tautomers (A, B, C and D) that have a core phenolic quinone to which various side chains are attached and which play an important role in fungal pathogenesis. The non-reducing polyketide synthase PKS1 was proposed to iteratively catalyze decarboxylation between acetyl-CoA and malonyl-CoA subunits for polyketide chain elongation. The released polyketide undergoes cyclization to form an aromatic ring, and proceeds via serial modification steps to produce the heptaketide back- bone of elsinochrome. As elsinochrome has a symmetrical structure, two identical heptaketides are fused to form a core 1,2-dihydrobenzo-perylene ring structure, which can then be successively modified to produce the various derivatives of elsinochrome. Some of these reactions may be cooperatively carried out, at least in part, by the products of RDT1, OXR1 and PKS1. PRF1, embedded within the elsinochrome cluster possibly functions to stabilize some of the biosynthetic enzymes required for elsinochrome production. As prefoldin is a hexamer containing 2 a and 4 b subunits, additional prefoldin subunits, whose coding genes may not immediately link to the elsinochrome biosynthetic gene cluster, are required to fulfill the chaperone function. In addition, no methyltransferase-coding gene exists within the biosynthetic gene cluster, even though elsinochrome has four methyl groups at positions C3, C7, C8 and C12. Apparently, the identified gene cluster does not contain the entire entourage of genes responsible for elsinochrome biosynthesis. Once elsinochrome is synthesized, it must be exported outside the fungal cells, which is probably accomplished by the ECT1 transporter, to avoid toxicity. This Elsinoe fawcettii (Citrus scab fungus) protein is Oxidoreductase 1.